We begin with the raw amino-acid sequence, 569 residues long: Sulfite reductase [NADPH] hemoprotein beta-component (569 aa).

[4Fe-4S] cluster is bound by residues cysteine 433, cysteine 439, cysteine 478, and cysteine 482. Cysteine 482 contributes to the siroheme binding site.

Belongs to the nitrite and sulfite reductase 4Fe-4S domain family. As to quaternary structure, alpha(8)-beta(8). The alpha component is a flavoprotein, the beta component is a hemoprotein. Siroheme serves as cofactor. [4Fe-4S] cluster is required as a cofactor.

The enzyme catalyses hydrogen sulfide + 3 NADP(+) + 3 H2O = sulfite + 3 NADPH + 4 H(+). Its pathway is sulfur metabolism; hydrogen sulfide biosynthesis; hydrogen sulfide from sulfite (NADPH route): step 1/1. Component of the sulfite reductase complex that catalyzes the 6-electron reduction of sulfite to sulfide. This is one of several activities required for the biosynthesis of L-cysteine from sulfate. The polypeptide is Sulfite reductase [NADPH] hemoprotein beta-component (Buchnera aphidicola subsp. Acyrthosiphon pisum (strain 5A)).